Consider the following 36-residue polypeptide: Potassium channel toxin alpha-KTx 16.1 (36 aa).

Intrachain disulfides connect Cys-7–Cys-28, Cys-13–Cys-33, and Cys-17–Cys-35.

The protein belongs to the short scorpion toxin superfamily. Potassium channel inhibitor family. Alpha-KTx 16 subfamily. In terms of tissue distribution, expressed by the venom gland.

It is found in the secreted. In terms of biological role, blocks calcium-activated potassium channels. The protein is Potassium channel toxin alpha-KTx 16.1 of Hottentotta tamulus (Eastern Indian scorpion).